Reading from the N-terminus, the 653-residue chain is Large subunit GTPase 1 homolog (653 aa).

The disordered stretch occupies residues methionine 1 to glutamine 47. The region spanning tryptophan 155–proline 439 is the CP-type G domain. Residue asparagine 203–aspartate 206 participates in GTP binding. The segment covering alanine 248–alanine 275 has biased composition (acidic residues). The segment at alanine 248–lysine 323 is disordered. Residues glutamate 276–leucine 291 show a composition bias toward polar residues. Over residues serine 293 to glycine 320 the composition is skewed to acidic residues. GTP-binding positions include glycine 388–serine 395 and aspartate 432–glycine 435. Positions alanine 621–asparagine 653 are disordered. The segment covering proline 631 to asparagine 653 has biased composition (basic residues).

This sequence belongs to the TRAFAC class YlqF/YawG GTPase family. LSG1 subfamily.

The protein localises to the cytoplasm. It is found in the endoplasmic reticulum. Its subcellular location is the nucleus. It localises to the cajal body. It catalyses the reaction GTP + H2O = GDP + phosphate + H(+). Functionally, GTPase required for the XPO1/CRM1-mediated nuclear export of the 60S ribosomal subunit. Probably acts by mediating the release of NMD3 from the 60S ribosomal subunit after export into the cytoplasm. Functions as a GTPase. May act by mediating the release of NMD3 from the 60S ribosomal subunit after export into the cytoplasm during the 60S ribosomal subunit maturation. This chain is Large subunit GTPase 1 homolog, found in Gallus gallus (Chicken).